The chain runs to 1485 residues: Dicer-like protein 2 (1485 aa).

Over residues 1–11 (MSSQDESASSS) the composition is skewed to low complexity. The interval 1 to 61 (MSSQDESASS…EPQPSGNGPR (61 aa)) is disordered. The region spanning 72 to 250 (MFQASMQQNI…MEDLESSLDS (179 aa)) is the Helicase ATP-binding domain. 85 to 92 (MDTGSGKT) contacts ATP. A DEAH box motif is present at residues 193–196 (DEAH). One can recognise a Helicase C-terminal domain in the interval 415-579 (KLQVLLRILR…RYENDMRELD (165 aa)). The region spanning 609-712 (AKGHLEHFCR…LPIRESDFVD (104 aa)) is the Dicer dsRNA-binding fold domain. 2 consecutive RNase III domains span residues 988–1127 (AQEL…IEGG) and 1168–1358 (LGPL…VDSG). The Mg(2+) site is built by Glu-1208, Asp-1344, and Glu-1347. Residues 1388-1469 (HPKEELGRVA…ALEVIRVWEE (82 aa)) form the DRBM domain.

Belongs to the helicase family. Dicer subfamily. It depends on Mg(2+) as a cofactor. Mn(2+) is required as a cofactor.

Its function is as follows. Dicer-like endonuclease involved in cleaving double-stranded RNA in the RNA interference (RNAi) pathway. Produces 21 to 25 bp dsRNAs (siRNAs) which target the selective destruction of homologous RNAs leading to sequence-specific suppression of gene expression, called post-transcriptional gene silencing (PTGS). Part of a broad host defense response against viral infection and transposons. This Pyricularia oryzae (strain 70-15 / ATCC MYA-4617 / FGSC 8958) (Rice blast fungus) protein is Dicer-like protein 2 (DCL2).